Here is a 612-residue protein sequence, read N- to C-terminus: BTB/POZ domain-containing protein 9 (612 aa).

The BTB domain maps to 36–104; it reads GDVTFVVEKK…IYTGRATLTD (69 aa). Residues 142 to 240 form the BACK domain; it reads VCMTFDVASL…SLTELLNVVR (99 aa). A disordered region spans residues 559 to 612; sequence QQSNQKEDSSEEPGTGDPSTPNQQLDPHAPRAPSASSLPPSPGPNSRSPNQQNQ. Residues 589 to 612 show a composition bias toward low complexity; that stretch reads RAPSASSLPPSPGPNSRSPNQQNQ.

As to expression, expressed in the brain (at protein level).

The sequence is that of BTB/POZ domain-containing protein 9 (Btbd9) from Mus musculus (Mouse).